The sequence spans 403 residues: Aspartic protease PEP1 (403 aa).

Residues 1–20 (MVQISQIGAVLAVCSTLTVA) form the signal peptide. Residues 21 to 67 (APTKGKARFNVPQVAVPMKAVHHPAVAYARALHKFGMKVPKAVSDAA) constitute a propeptide, activation peptide. The 319-residue stretch at 82-400 (YVTQVTVGQG…DTEGPRIGFA (319 aa)) folds into the Peptidase A1 domain. The active site involves aspartate 98. Residues asparagine 159 and asparagine 270 are each glycosylated (N-linked (GlcNAc...) asparagine). Residue aspartate 293 is part of the active site. Cysteine 329 and cysteine 361 are oxidised to a cystine.

This sequence belongs to the peptidase A1 family.

It is found in the secreted. The catalysed reaction is Hydrolysis of proteins with broad specificity. Generally favors hydrophobic residues in P1 and P1', but also accepts Lys in P1, which leads to activation of trypsinogen. Does not clot milk.. Its function is as follows. Secreted aspartic endopeptidase that allows assimilation of proteinaceous substrates. Can catalyze hydrolysis of the major structural proteins of basement membrane, elastin, collagen, and laminin. Thought to play a significant role in virulence. This is Aspartic protease PEP1 (PEP1) from Arthroderma benhamiae (strain ATCC MYA-4681 / CBS 112371) (Trichophyton mentagrophytes).